The primary structure comprises 205 residues: Ribonuclease HII (205 aa).

Positions 14–205 (ERICGIDEAG…SFKVRRLNEA (192 aa)) constitute an RNase H type-2 domain. A divalent metal cation-binding residues include D20, E21, and D117.

It belongs to the RNase HII family. It depends on Mn(2+) as a cofactor. Mg(2+) is required as a cofactor.

It localises to the cytoplasm. It catalyses the reaction Endonucleolytic cleavage to 5'-phosphomonoester.. Endonuclease that specifically degrades the RNA of RNA-DNA hybrids. The polypeptide is Ribonuclease HII (Chlorobium phaeovibrioides (strain DSM 265 / 1930) (Prosthecochloris vibrioformis (strain DSM 265))).